Reading from the N-terminus, the 692-residue chain is Elongation factor G (692 aa).

The region spanning 8 to 282 (EKTRNIGIMA…AVVEYMPAPT (275 aa)) is the tr-type G domain. Residues 17–24 (AHIDAGKT), 81–85 (DTPGH), and 135–138 (NKMD) each bind GTP. Positions 285 to 304 (PNIKGVHPETGEADERHSSD) are disordered. Basic and acidic residues predominate over residues 290-304 (VHPETGEADERHSSD).

Belongs to the TRAFAC class translation factor GTPase superfamily. Classic translation factor GTPase family. EF-G/EF-2 subfamily.

It localises to the cytoplasm. In terms of biological role, catalyzes the GTP-dependent ribosomal translocation step during translation elongation. During this step, the ribosome changes from the pre-translocational (PRE) to the post-translocational (POST) state as the newly formed A-site-bound peptidyl-tRNA and P-site-bound deacylated tRNA move to the P and E sites, respectively. Catalyzes the coordinated movement of the two tRNA molecules, the mRNA and conformational changes in the ribosome. This chain is Elongation factor G, found in Desulfitobacterium hafniense (strain DSM 10664 / DCB-2).